Reading from the N-terminus, the 662-residue chain is A-kinase anchor protein 10, mitochondrial (662 aa).

Residues 1–28 (MRGAGPSPRHSPRALRPDPGPAMSFFRR) constitute a mitochondrion transit peptide. 3 disordered regions span residues 1–55 (MRGA…SPQK), 178–205 (KQSS…ALDR), and 242–280 (GHSA…NSCS). The segment covering 32–43 (GKEQEKTLDVKS) has biased composition (basic and acidic residues). Phosphoserine is present on residues Ser52 and Ser189. RGS domains follow at residues 125-369 (TLEQ…CKYQ) and 379-505 (YLAD…YKYL). Polar residues predominate over residues 256–280 (GSHQIPTDSQDSSSRLAVGSRNSCS). Ser281 is modified (phosphoserine). The segment at 634 to 647 (LAWKIAKMIVSDVM) is PKA-RII subunit binding.

Highly expressed in testis, kidney and lung, followed by brain, skeletal muscle, liver, spleen and heart. Also expressed in brown adipose tissue and pancreas.

The protein resides in the mitochondrion. The protein localises to the membrane. It localises to the cytoplasm. Its function is as follows. Differentially targeted protein that binds to type I and II regulatory subunits of protein kinase A and anchors them to the mitochondria or the plasma membrane. Although the physiological relevance between PKA and AKAPS with mitochondria is not fully understood, one idea is that BAD, a proapoptotic member, is phosphorylated and inactivated by mitochondria-anchored PKA. It cannot be excluded too that it may facilitate PKA as well as G protein signal transduction, by acting as an adapter for assembling multiprotein complexes. With its RGS domain, it could lead to the interaction to G-alpha proteins, providing a link between the signaling machinery and the downstream kinase. The chain is A-kinase anchor protein 10, mitochondrial (Akap10) from Mus musculus (Mouse).